The chain runs to 59 residues: Cecropin-A (59 aa).

An N-terminal signal peptide occupies residues 1 to 23 (MNFNKLFVIVLLAALAFFGQAEA). The residue at position 57 (Leu57) is a Leucine amide.

The protein belongs to the cecropin family.

Its subcellular location is the secreted. In terms of biological role, cecropins have lytic and antibacterial activity against several Gram-positive and Gram-negative bacteria. This is Cecropin-A (CECA) from Culex pipiens pipiens (Northern house mosquito).